Reading from the N-terminus, the 669-residue chain is UvrABC system protein B (669 aa).

One can recognise a Helicase ATP-binding domain in the interval 26–183 (EGLEDGLAHQ…RRLADLQYTR (158 aa)). 39-46 (GVTGSGKT) is a binding site for ATP. A Beta-hairpin motif is present at residues 92–115 (YYDYYQPEAYVPSSDTFIEKDASV). Residues 431–593 (QVDDLLSEIR…IVPKGLNKKI (163 aa)) form the Helicase C-terminal domain. The UVR domain occupies 629–664 (EKEIQRLETEMYQHAKDLEFEKAAQTRDKLQTLRAQ).

This sequence belongs to the UvrB family. Forms a heterotetramer with UvrA during the search for lesions. Interacts with UvrC in an incision complex.

The protein resides in the cytoplasm. The UvrABC repair system catalyzes the recognition and processing of DNA lesions. A damage recognition complex composed of 2 UvrA and 2 UvrB subunits scans DNA for abnormalities. Upon binding of the UvrA(2)B(2) complex to a putative damaged site, the DNA wraps around one UvrB monomer. DNA wrap is dependent on ATP binding by UvrB and probably causes local melting of the DNA helix, facilitating insertion of UvrB beta-hairpin between the DNA strands. Then UvrB probes one DNA strand for the presence of a lesion. If a lesion is found the UvrA subunits dissociate and the UvrB-DNA preincision complex is formed. This complex is subsequently bound by UvrC and the second UvrB is released. If no lesion is found, the DNA wraps around the other UvrB subunit that will check the other stand for damage. In Proteus mirabilis (strain HI4320), this protein is UvrABC system protein B.